A 61-amino-acid chain; its full sequence is MAQFLGLGDIGGNLVYELIMILYKIFKFISLKILDGLGNFMEIALEYLVKFVYQITRFIHR.

This is an uncharacterized protein from Acidianus bottle-shaped virus (isolate Italy/Pozzuoli) (ABV).